Reading from the N-terminus, the 135-residue chain is Photosystem II extrinsic protein U (135 aa).

An N-terminal signal peptide occupies residues Met1–Ala29.

The protein belongs to the PsbU family. As to quaternary structure, PSII is composed of 1 copy each of membrane proteins PsbA, PsbB, PsbC, PsbD, PsbE, PsbF, PsbH, PsbI, PsbJ, PsbK, PsbL, PsbM, PsbT, PsbX, PsbY, Psb30/Ycf12, peripheral proteins PsbO, CyanoQ (PsbQ), PsbU, PsbV and a large number of cofactors. It forms dimeric complexes.

It is found in the cellular thylakoid membrane. One of the extrinsic, lumenal subunits of photosystem II (PSII). PSII is a light-driven water plastoquinone oxidoreductase, using light energy to abstract electrons from H(2)O, generating a proton gradient subsequently used for ATP formation. The extrinsic proteins stabilize the structure of photosystem II oxygen-evolving complex (OEC), the ion environment of oxygen evolution and protect the OEC against heat-induced inactivation. This chain is Photosystem II extrinsic protein U, found in Parasynechococcus marenigrum (strain WH8102).